Consider the following 570-residue polypeptide: Nucleoprotein (570 aa).

The segment at 54–241 (MRKEKRDDSD…IEPKKSAINI (188 aa)) is binding site for the cap structure m7GTP. Mn(2+) is bound by residues Asp390 and Glu392. Zn(2+) contacts are provided by Glu400, Cys507, His510, and Cys530. Residue Asp534 coordinates Mn(2+).

This sequence belongs to the arenaviridae nucleocapsid protein family. As to quaternary structure, homomultimerizes to form the nucleocapsid. Binds to viral genomic RNA. Interacts with glycoprotein G2. Interacts with protein Z; this interaction probably directs the encapsidated genome to budding sites. Interacts with protein L; this interaction does not interfere with Z-L interaction. Interacts with host IKBKE (via Protein kinase domain); the interaction inhibits IKBKE kinase activity.

It localises to the virion. It is found in the host cytoplasm. Encapsidates the genome, protecting it from nucleases. The encapsidated genomic RNA is termed the nucleocapsid (NC). Serves as template for viral transcription and replication. The increased presence of protein N in host cell does not seem to trigger the switch from transcription to replication as observed in other negative strain RNA viruses. Through the interaction with host IKBKE, strongly inhibits the phosphorylation and nuclear translocation of host IRF3, a protein involved in interferon activation pathway, leading to the inhibition of interferon-beta and IRF3-dependent promoters activation. Also encodes a functional 3'-5' exoribonuclease that degrades preferentially dsRNA substrates and thereby participates in the suppression of interferon induction. This is Nucleoprotein from Mopeia virus (MOPV).